Here is a 133-residue protein sequence, read N- to C-terminus: UPF0768 protein C977.18 (133 aa).

Belongs to the UPF0768 family.

The sequence is that of UPF0768 protein C977.18 from Schizosaccharomyces pombe (strain 972 / ATCC 24843) (Fission yeast).